The chain runs to 81 residues: METRAFWTTLLLVLVAGSSCKAQEFVGLSPSQCMVPANVRVDCGYPTVTSEQCNNRGCCFDSSIPNVPWCFKPLQETECTF.

An N-terminal signal peptide occupies residues 1–22 (METRAFWTTLLLVLVAGSSCKA). The P-type domain occupies 31-74 (SQCMVPANVRVDCGYPTVTSEQCNNRGCCFDSSIPNVPWCFKPL). 3 disulfide bridges follow: Cys-33–Cys-59, Cys-43–Cys-58, and Cys-53–Cys-70.

As to quaternary structure, monomer. Homodimer; disulfide-linked. In terms of tissue distribution, expressed in goblet cells of the intestines, and colon, in paraventricular hypothalamus and supraoptic nuclei. Weakly expressed in gastric epithelial cells (at protein level). Expressed by goblet cells of small and large intestinal epithelia, kidney and stomach. Expressed in the paraventricular hypothalamus, arcuate nucleus and amygdala of the brain. Weakly expressed in gastric epithelial cells.

Its subcellular location is the secreted. It is found in the extracellular space. The protein resides in the extracellular matrix. The protein localises to the cytoplasm. Its function is as follows. Involved in the maintenance and repair of the intestinal mucosa. Promotes the mobility of epithelial cells in healing processes (motogen). The sequence is that of Trefoil factor 3 (Tff3) from Rattus norvegicus (Rat).